The sequence spans 128 residues: Putative transmembrane protein 244 (128 aa).

Transmembrane regions (helical) follow at residues 17–37 (FLLC…MGCV), 65–85 (VLLV…VPVV), and 93–113 (AISV…EFPL).

Its subcellular location is the membrane. This chain is Putative transmembrane protein 244 (TMEM244), found in Homo sapiens (Human).